The primary structure comprises 492 residues: Probable protein phosphatase 2C 33 (492 aa).

The disordered stretch occupies residues 1 to 46 (MGSCLSAESRSPRPGSPCSPAFSVRKRKNSKKRPGSRNSSFDYRRE). The span at 24-35 (VRKRKNSKKRPG) shows a compositional bias: basic residues. Positions 64–393 (VACIYTQQGK…DDCAAVCLYL (330 aa)) constitute a PPM-type phosphatase domain. Positions 100, 101, 338, and 384 each coordinate Mn(2+). The segment at 406–468 (SISKLEDGEE…ADNLDSEPGT (63 aa)) is disordered. The span at 412–427 (DGEEEELKATTEDDDA) shows a compositional bias: acidic residues. A compositionally biased stretch (basic and acidic residues) spans 441–460 (SGKEIALDESETEKLIKEAD).

This sequence belongs to the PP2C family. Mg(2+) serves as cofactor. Requires Mn(2+) as cofactor.

The catalysed reaction is O-phospho-L-seryl-[protein] + H2O = L-seryl-[protein] + phosphate. It carries out the reaction O-phospho-L-threonyl-[protein] + H2O = L-threonyl-[protein] + phosphate. The protein is Probable protein phosphatase 2C 33 (PPC6-1) of Arabidopsis thaliana (Mouse-ear cress).